Consider the following 461-residue polypeptide: Argininosuccinate lyase (461 aa).

It belongs to the lyase 1 family. Argininosuccinate lyase subfamily.

It localises to the cytoplasm. It catalyses the reaction 2-(N(omega)-L-arginino)succinate = fumarate + L-arginine. It functions in the pathway amino-acid biosynthesis; L-arginine biosynthesis; L-arginine from L-ornithine and carbamoyl phosphate: step 3/3. This Shewanella piezotolerans (strain WP3 / JCM 13877) protein is Argininosuccinate lyase.